The primary structure comprises 21 residues: 78 kDa dihydrolipoyllysine-residue acetyltransferase component of pyruvate dehydrogenase complex (21 aa).

The protein belongs to the 2-oxoacid dehydrogenase family. Forms a 60-polypeptide structural core. It depends on (R)-lipoate as a cofactor.

The protein localises to the mitochondrion matrix. It carries out the reaction N(6)-[(R)-dihydrolipoyl]-L-lysyl-[protein] + acetyl-CoA = N(6)-[(R)-S(8)-acetyldihydrolipoyl]-L-lysyl-[protein] + CoA. Its function is as follows. The pyruvate dehydrogenase complex catalyzes the overall conversion of pyruvate to acetyl-CoA and CO(2). It contains multiple copies of three enzymatic components: pyruvate dehydrogenase (E1), dihydrolipoamide acetyltransferase (E2) and lipoamide dehydrogenase (E3). The chain is 78 kDa dihydrolipoyllysine-residue acetyltransferase component of pyruvate dehydrogenase complex from Solanum tuberosum (Potato).